A 260-amino-acid chain; its full sequence is tRNA pseudouridine synthase C (260 aa).

D54 is a catalytic residue.

Belongs to the pseudouridine synthase RluA family.

The enzyme catalyses uridine(65) in tRNA = pseudouridine(65) in tRNA. Responsible for synthesis of pseudouridine from uracil-65 in transfer RNAs. The polypeptide is tRNA pseudouridine synthase C (truC) (Escherichia coli O6:H1 (strain CFT073 / ATCC 700928 / UPEC)).